Here is a 275-residue protein sequence, read N- to C-terminus: Putative hydro-lyase SPO1111 (275 aa).

This sequence belongs to the D-glutamate cyclase family.

The sequence is that of Putative hydro-lyase SPO1111 from Ruegeria pomeroyi (strain ATCC 700808 / DSM 15171 / DSS-3) (Silicibacter pomeroyi).